The sequence spans 232 residues: Octanoyltransferase (232 aa).

The BPL/LPL catalytic domain occupies 32–219; that stretch reads NIIYDTLILL…SFKVFNFSSY (188 aa). Residues 77–84, 140–142, and 153–155 each bind substrate; these read RGGDITYH, AIG, and GFA. Cys-171 (acyl-thioester intermediate) is an active-site residue.

This sequence belongs to the LipB family.

The protein resides in the cytoplasm. It catalyses the reaction octanoyl-[ACP] + L-lysyl-[protein] = N(6)-octanoyl-L-lysyl-[protein] + holo-[ACP] + H(+). It participates in protein modification; protein lipoylation via endogenous pathway; protein N(6)-(lipoyl)lysine from octanoyl-[acyl-carrier-protein]: step 1/2. Its function is as follows. Catalyzes the transfer of endogenously produced octanoic acid from octanoyl-acyl-carrier-protein onto the lipoyl domains of lipoate-dependent enzymes. Lipoyl-ACP can also act as a substrate although octanoyl-ACP is likely to be the physiological substrate. The polypeptide is Octanoyltransferase (Dictyoglomus turgidum (strain DSM 6724 / Z-1310)).